The following is a 508-amino-acid chain: Glycerol kinase (508 aa).

T14 is an ADP binding site. The ATP site is built by T14, T15, and S16. Sn-glycerol 3-phosphate is bound at residue T14. An ADP-binding site is contributed by R18. Sn-glycerol 3-phosphate contacts are provided by R84, E85, and Y136. Glycerol contacts are provided by R84, E85, and Y136. H232 is subject to Phosphohistidine; by HPr. Position 246 (D246) interacts with sn-glycerol 3-phosphate. Glycerol contacts are provided by D246 and Q247. ADP-binding residues include T268 and G311. T268, G311, Q315, and G412 together coordinate ATP. G412 and N416 together coordinate ADP.

It belongs to the FGGY kinase family. Homotetramer and homodimer (in equilibrium). Post-translationally, the phosphoenolpyruvate-dependent sugar phosphotransferase system (PTS), including enzyme I, and histidine-containing protein (HPr) are required for the phosphorylation, which leads to the activation of the enzyme.

It carries out the reaction glycerol + ATP = sn-glycerol 3-phosphate + ADP + H(+). It functions in the pathway polyol metabolism; glycerol degradation via glycerol kinase pathway; sn-glycerol 3-phosphate from glycerol: step 1/1. With respect to regulation, activated by phosphorylation and inhibited by fructose 1,6-bisphosphate (FBP). Its function is as follows. Key enzyme in the regulation of glycerol uptake and metabolism. Catalyzes the phosphorylation of glycerol to yield sn-glycerol 3-phosphate. The chain is Glycerol kinase from Streptococcus pyogenes serotype M4 (strain MGAS10750).